Here is a 456-residue protein sequence, read N- to C-terminus: Phosphomannomutase (456 aa).

Serine 98 functions as the Phosphoserine intermediate in the catalytic mechanism. Mg(2+) contacts are provided by serine 98, aspartate 246, aspartate 248, and aspartate 250.

Belongs to the phosphohexose mutase family. Mg(2+) is required as a cofactor.

It carries out the reaction alpha-D-mannose 1-phosphate = D-mannose 6-phosphate. It functions in the pathway nucleotide-sugar biosynthesis; GDP-alpha-D-mannose biosynthesis; alpha-D-mannose 1-phosphate from D-fructose 6-phosphate: step 2/2. It participates in bacterial outer membrane biogenesis; LPS O-antigen biosynthesis. Functionally, involved in GDP-mannose biosynthesis which serves as the activated sugar nucleotide precursor for mannose residues in cell surface polysaccharides. This enzyme participates in synthesis of the LPS O9 antigen. The chain is Phosphomannomutase (manB) from Escherichia coli.